The chain runs to 33 residues: Pheromone biosynthesis-activating neuropeptide (33 aa).

The tract at residues 1 to 33 (LADDMPATMADQEVYRPEPEQIDSRNKYFSPRL) is disordered. Residues 13–26 (EVYRPEPEQIDSRN) show a composition bias toward basic and acidic residues. Leucine 33 is subject to Leucine amide.

The protein belongs to the pyrokinin family.

The protein localises to the secreted. Its function is as follows. Involved in the control of pheromone production in females. This Lymantria dispar (Gypsy moth) protein is Pheromone biosynthesis-activating neuropeptide.